Consider the following 387-residue polypeptide: MGHNQPMQSSNPQEHFVQIALDIEHRLTTPISLTSDSNQRRNQWVTIIICTILAVTGQCIARLLENYYFLHKNLSRRRGILTQTLLQVVGFPILLLPFLLHFLIKKQKQLLIFSGETSLKHLAITYSILCIYMFCQAFFSDVRNQIPYRVFTLTYTTQLLFTLIFSKYYNDIKFNRWTFISLILAVLAGAFTLYTFSAGSPIYGKKSYGYGIINVAFGAAIFFSLLLCIIRKVFEELISFCNTSTNRKQPSFVVVLEMIIFLSLVVTIILVAAVLISGEHHDMKKEMETFTKGDIAYVRTMVGQAVAWQIYWVGIVGLVFAVSAVFSNVISVCTWPIVSLLVAFLYNTHDHFDVFRGIALGAAALSVSCYIYIIHKEKSDDDDQSTS.

10 consecutive transmembrane segments (helical) span residues 44–64 (WVTI…ARLL), 84–104 (TLLQ…HFLI), 122–142 (LAIT…FSDV), 150–169 (VFTL…SKYY), 179–199 (FISL…FSAG), 210–230 (YGII…LCII), 252–272 (FVVV…ILVA), 306–326 (VAWQ…SAVF), 329–349 (VISV…YNTH), and 354–374 (VFRG…IYII).

It belongs to the purine permeases (TC 2.A.7.14) family.

Its subcellular location is the membrane. The chain is Putative purine permease 15 (PUP15) from Arabidopsis thaliana (Mouse-ear cress).